Reading from the N-terminus, the 102-residue chain is MYAIIETGGKQFRVEEGAKIFVEKLVAEAGSEIVIDKVLMLGGGAFSVGAPYVEGAKVTAEVVEHGRGEKLIVFKKWRRNDSRKKQGHRQDFTALKIKAIQA.

This sequence belongs to the bacterial ribosomal protein bL21 family. As to quaternary structure, part of the 50S ribosomal subunit. Contacts protein L20.

Its function is as follows. This protein binds to 23S rRNA in the presence of protein L20. The protein is Large ribosomal subunit protein bL21 of Nitratidesulfovibrio vulgaris (strain DSM 19637 / Miyazaki F) (Desulfovibrio vulgaris).